Here is a 259-residue protein sequence, read N- to C-terminus: UPF0246 protein PSPA7_1607 (259 aa).

The protein belongs to the UPF0246 family.

The protein is UPF0246 protein PSPA7_1607 of Pseudomonas paraeruginosa (strain DSM 24068 / PA7) (Pseudomonas aeruginosa (strain PA7)).